Here is a 206-residue protein sequence, read N- to C-terminus: Small ribosomal subunit protein uS4A (206 aa).

An S4 RNA-binding domain is found at 96-156 (GRLDNVVYRM…EKAKKQSRIG (61 aa)).

Belongs to the universal ribosomal protein uS4 family. In terms of assembly, part of the 30S ribosomal subunit. Contacts protein S5. The interaction surface between S4 and S5 is involved in control of translational fidelity.

One of the primary rRNA binding proteins, it binds directly to 16S rRNA where it nucleates assembly of the body of the 30S subunit. Its function is as follows. With S5 and S12 plays an important role in translational accuracy. This chain is Small ribosomal subunit protein uS4A, found in Psychromonas ingrahamii (strain DSM 17664 / CCUG 51855 / 37).